A 297-amino-acid polypeptide reads, in one-letter code: ATP synthase gamma chain (297 aa).

Belongs to the ATPase gamma chain family. As to quaternary structure, F-type ATPases have 2 components, CF(1) - the catalytic core - and CF(0) - the membrane proton channel. CF(1) has five subunits: alpha(3), beta(3), gamma(1), delta(1), epsilon(1). CF(0) has three main subunits: a, b and c.

The protein localises to the cell membrane. In terms of biological role, produces ATP from ADP in the presence of a proton gradient across the membrane. The gamma chain is believed to be important in regulating ATPase activity and the flow of protons through the CF(0) complex. In Beutenbergia cavernae (strain ATCC BAA-8 / DSM 12333 / CCUG 43141 / JCM 11478 / NBRC 16432 / NCIMB 13614 / HKI 0122), this protein is ATP synthase gamma chain.